We begin with the raw amino-acid sequence, 356 residues long: 4-hydroxy-3-methylbut-2-en-1-yl diphosphate synthase (flavodoxin) (356 aa).

[4Fe-4S] cluster is bound by residues Cys264, Cys267, Cys299, and Glu306.

This sequence belongs to the IspG family. [4Fe-4S] cluster serves as cofactor.

It catalyses the reaction (2E)-4-hydroxy-3-methylbut-2-enyl diphosphate + oxidized [flavodoxin] + H2O + 2 H(+) = 2-C-methyl-D-erythritol 2,4-cyclic diphosphate + reduced [flavodoxin]. The protein operates within isoprenoid biosynthesis; isopentenyl diphosphate biosynthesis via DXP pathway; isopentenyl diphosphate from 1-deoxy-D-xylulose 5-phosphate: step 5/6. Functionally, converts 2C-methyl-D-erythritol 2,4-cyclodiphosphate (ME-2,4cPP) into 1-hydroxy-2-methyl-2-(E)-butenyl 4-diphosphate. This is 4-hydroxy-3-methylbut-2-en-1-yl diphosphate synthase (flavodoxin) from Natranaerobius thermophilus (strain ATCC BAA-1301 / DSM 18059 / JW/NM-WN-LF).